The sequence spans 538 residues: MTVLTREKKPYFGLTGGWLTFWVTVACATDMSLFGYDQGVFSGVVITRDFLEVHDLVGPEKTKTLSTVTAIYDVGCFFGAIVAFTIGEQLGRKKAILLGTTIMAIGAVLQAASFSLAQMFVGRIILGIGNGINTATAPIWQTETSQLKWRGKLVIFEMMMNIFGFCLVNWINYGLSFVGGSIAWRFPLAFQFFFLIILWSTTPWLPESPRWLIAHGRQEEATVVLSCLEAKPIDDPFVIAQRNEIEFSVRYERENSMRWRDLCQKKGNDSKTLRRLLLGAGSQFMQQFGGINIMSYYLPTVLMDSVGLSDTMARLLAACNALSYLVFSGLAVLLVERIGRRGLMLLSTFGQFLCFLIITILLRFSRISDNGEKFASASVAFFFLYYGAFGIGMLGVPWLYPTEINSLPMRTKGAAVATATDWITNFVVVEITPIGIKNIDWKFWIVWTVTNAAFLPILYFLYPETANRSLEDMDEYYRSNPALVVTKDPDAICRRRPQKYLQREEEEIERAAAAVDKRALSVGAVEHAEWTNAMGNKS.

The next 6 membrane-spanning stretches (helical) occupy residues 14–34, 67–87, 96–116, 120–140, 162–182, and 186–206; these read LTGG…MSLF, TVTA…FTIG, ILLG…SFSL, FVGR…APIW, IFGF…GGSI, and FPLA…PWLP. An N-linked (GlcNAc...) asparagine glycan is attached at asparagine 268. Transmembrane regions (helical) follow at residues 288–308, 315–335, 342–362, 379–399, 416–436, and 443–463; these read FGGI…SVGL, LLAA…VLLV, GLML…TILL, VAFF…VPWL, VATA…PIGI, and FWIV…FLYP. An N-linked (GlcNAc...) asparagine glycan is attached at asparagine 467.

This sequence belongs to the major facilitator superfamily. Sugar transporter (TC 2.A.1.1) family.

The protein localises to the membrane. In terms of biological role, MFS-type transporter; part of the gene cluster that mediates the biosynthesis of oryzines, natural products with an unusual maleidride backbone. The sequence is that of MFS-type transporter oryC from Aspergillus oryzae (strain ATCC 42149 / RIB 40) (Yellow koji mold).